Reading from the N-terminus, the 117-residue chain is Large ribosomal subunit protein bL19 (117 aa).

The protein belongs to the bacterial ribosomal protein bL19 family.

Functionally, this protein is located at the 30S-50S ribosomal subunit interface and may play a role in the structure and function of the aminoacyl-tRNA binding site. The protein is Large ribosomal subunit protein bL19 of Micrococcus luteus (strain ATCC 4698 / DSM 20030 / JCM 1464 / CCM 169 / CCUG 5858 / IAM 1056 / NBRC 3333 / NCIMB 9278 / NCTC 2665 / VKM Ac-2230) (Micrococcus lysodeikticus).